An 865-amino-acid polypeptide reads, in one-letter code: Bifunctional uridylyltransferase/uridylyl-removing enzyme (865 aa).

The interval 1-318 is uridylyltransferase; that stretch reads MPHVDLNPLK…FPRPDSDARL (318 aa). The uridylyl-removing stretch occupies residues 319-675; that stretch reads IDDDFRNLRE…VRPTEHGEGL (357 aa). Residues 437 to 559 form the HD domain; that stretch reads VDQHTLAVVR…VGDERRLAAL (123 aa). ACT domains follow at residues 676 to 762 and 789 to 865; these read QVMV…RLPH and RLSV…QQAA. Residues 747-767 form a disordered region; it reads DPHAARHAHAPRRLPHSHARR. The segment covering 751-767 has biased composition (basic residues); that stretch reads ARHAHAPRRLPHSHARR.

Belongs to the GlnD family. Mg(2+) serves as cofactor.

It carries out the reaction [protein-PII]-L-tyrosine + UTP = [protein-PII]-uridylyl-L-tyrosine + diphosphate. The enzyme catalyses [protein-PII]-uridylyl-L-tyrosine + H2O = [protein-PII]-L-tyrosine + UMP + H(+). Uridylyltransferase (UTase) activity is inhibited by glutamine, while glutamine activates uridylyl-removing (UR) activity. Its function is as follows. Modifies, by uridylylation and deuridylylation, the PII regulatory proteins (GlnB and homologs), in response to the nitrogen status of the cell that GlnD senses through the glutamine level. Under low glutamine levels, catalyzes the conversion of the PII proteins and UTP to PII-UMP and PPi, while under higher glutamine levels, GlnD hydrolyzes PII-UMP to PII and UMP (deuridylylation). Thus, controls uridylylation state and activity of the PII proteins, and plays an important role in the regulation of nitrogen assimilation and metabolism. The sequence is that of Bifunctional uridylyltransferase/uridylyl-removing enzyme from Bordetella pertussis (strain Tohama I / ATCC BAA-589 / NCTC 13251).